We begin with the raw amino-acid sequence, 525 residues long: MSNVERALISVSDKTGIVEFAQALADKGVELLSTGGTFKKLQEAGIAVREVSDYTGFPEMMAGRVKTLHPKVHGGILGRRGQDEQVMADNDISPIDLVVVNLYPFEATVANPDCSLEDAIENIDIGGPTMVRSAAKNNASVGIVTDAADYQRVLDDMAANNGALSDDLRFDLAIKAFEHTAAYDSAIANYFGKKVEGQDGMSNLDFPRTINLNFEKTQNMRYGENPHQKAAFYTERNPAPASIATAKQLQGKELSYNNIADTDAALECVKGFTKPACVIVKHANPCGVAVSLDGITTAYDLAFATDTESAFGGIIAFNRKLDAATAQAIVDRQFVEVIIAPSATEEALAITAAKKNVRVLVCGEMEGVAASGLDYKRVNGGLLVQDRDLGMITEGELKVVTKRAPTEAEMHDLIFAWKVAKFVKSNAIVYAKDRQTVGVGAGQMSRVNSARIAAIKAEHAGLQVKGSVMASDAFFPFRDGIDNAAKVGISCVIQPGGSIRDEEVIAAADEAGMAMVFTGMRHFRH.

The 145-residue stretch at 1 to 145 (MSNVERALIS…KNNASVGIVT (145 aa)) folds into the MGS-like domain.

The protein belongs to the PurH family.

The catalysed reaction is (6R)-10-formyltetrahydrofolate + 5-amino-1-(5-phospho-beta-D-ribosyl)imidazole-4-carboxamide = 5-formamido-1-(5-phospho-D-ribosyl)imidazole-4-carboxamide + (6S)-5,6,7,8-tetrahydrofolate. It catalyses the reaction IMP + H2O = 5-formamido-1-(5-phospho-D-ribosyl)imidazole-4-carboxamide. It participates in purine metabolism; IMP biosynthesis via de novo pathway; 5-formamido-1-(5-phospho-D-ribosyl)imidazole-4-carboxamide from 5-amino-1-(5-phospho-D-ribosyl)imidazole-4-carboxamide (10-formyl THF route): step 1/1. Its pathway is purine metabolism; IMP biosynthesis via de novo pathway; IMP from 5-formamido-1-(5-phospho-D-ribosyl)imidazole-4-carboxamide: step 1/1. The sequence is that of Bifunctional purine biosynthesis protein PurH from Alcanivorax borkumensis (strain ATCC 700651 / DSM 11573 / NCIMB 13689 / SK2).